Reading from the N-terminus, the 463-residue chain is MMNISNVSIALYLCTLFAFVSSDSPEAMRDLVTNFPGQPKVSFRHYAGYVTVNIISGRALFYWFFEAMTHPNVKPLVLWLNGGPGCSSVGYGATQEIGPFLVDNKGNSLKFNPYAWNKEANILFLESPAGVGFSYSNTSSDYRKLGDDFTARDSYTFLQKWFLRFPAYKEKDFFIAGESYAGKYVPELAEVIYDKNKDNENLSLHINLKGILLGNPLTSYAEDWTGWVDYAWNHAVVSDETYRVIKQSCNFSSDTTWDVKDCKEGVDEILKQYKEIDQFSLYTPICMHHSSKVDSYANYKTTIPRLFDGFDPCLDDYAKVFYNRADVQKALHATDGVHLKNWTICNDDILNHWNWTDSKRSVLPIYKKLIAGGFRVWVYSGDTDGRVPVLSTRYCINKLELPIKTAWRPWYHETQVSGWFQEYEGLTFATFRGAGHDVPSFKPSESLAFFSAFLNGVPPPLSR.

An N-terminal signal peptide occupies residues 1 to 22; it reads MMNISNVSIALYLCTLFAFVSS. 3 cysteine pairs are disulfide-bonded: C86–C345, C249–C262, and C286–C313. N-linked (GlcNAc...) asparagine glycosylation occurs at N137. S179 is a catalytic residue. N201 and N250 each carry an N-linked (GlcNAc...) asparagine glycan. Residues N341 and N354 are each glycosylated (N-linked (GlcNAc...) asparagine). Residues D384 and H436 contribute to the active site.

Belongs to the peptidase S10 family. In terms of tissue distribution, expressed in flowers.

The protein localises to the secreted. In terms of biological role, probable carboxypeptidase. This chain is Serine carboxypeptidase-like 32 (SCPL32), found in Arabidopsis thaliana (Mouse-ear cress).